The chain runs to 270 residues: Glutamate 5-kinase (270 aa).

K17 lines the ATP pocket. The substrate site is built by S57, D144, and N160. ATP contacts are provided by residues 180–181 and 222–228; these read SD and TGGMTSK.

The protein belongs to the glutamate 5-kinase family.

The protein localises to the cytoplasm. The catalysed reaction is L-glutamate + ATP = L-glutamyl 5-phosphate + ADP. The protein operates within amino-acid biosynthesis; L-proline biosynthesis; L-glutamate 5-semialdehyde from L-glutamate: step 1/2. Catalyzes the transfer of a phosphate group to glutamate to form L-glutamate 5-phosphate. This chain is Glutamate 5-kinase, found in Lactococcus lactis subsp. cremoris (strain SK11).